The following is a 642-amino-acid chain: Cylicin-1 (642 aa).

2 disordered regions span residues 167-203 (NGEPEILGNTEKNPSKSSHKIKLPKTSNSTSETNLEY) and 284-607 (NCSQ…CEPF). The span at 191–203 (KTSNSTSETNLEY) shows a compositional bias: polar residues. Tandem repeats lie at residues 294–313 (LKTGGKKERDSDIDSGGSKD), 314–344 (AKKEGKKKGKRESRKKRNTESSDAESGDSKD), 345–391 (GKKK…KKST), 392–432 (GSTG…SSKK), 433–464 (SKKDEKKENKGRKKKPIKDTESTDADSESEGD), 465–500 (STGKKNEKKDKKITKKGEKKDAKKNTASSESESDLG), 501–526 (VNKKKTKIKEIVSFSDSTSDSYSKAG), and 527–543 (RRKNVRRSDSESEDSSG). Positions 298-316 (GKKERDSDIDSGGSKDAKK) are enriched in basic and acidic residues. Residues 317 to 330 (EGKKKGKRESRKKR) show a composition bias toward basic residues. Residues 353–364 (KKNEIKKKKDTD) are compositionally biased toward basic and acidic residues. The span at 388-404 (KKSTGSTGSESVDSKST) shows a compositional bias: low complexity. Residues 405–416 (NKVKKQVKKGVM) show a composition bias toward basic residues. A compositionally biased stretch (basic and acidic residues) spans 428–440 (ASSKKSKKDEKKE). Acidic residues predominate over residues 454–463 (STDADSESEG). Positions 465-488 (STGKKNEKKDKKITKKGEKKDAKK) are enriched in basic and acidic residues. Over residues 513 to 523 (SFSDSTSDSYS) the composition is skewed to low complexity. The tract at residues 527–543 (RRKNVRRSDSESEDSSG) is 8 X approximate tandem repeats.

As to quaternary structure, interacts with proteins of spermatozoa head including ACTL7A, CCIN, FAM209 and SPACA1; the interactions may be necessary for proper acrosome attachment to the nuclear envelope. In terms of tissue distribution, testis.

The protein resides in the cytoplasm. Its subcellular location is the cytoskeleton. It is found in the perinuclear theca. The protein localises to the calyx. Functionally, plays a role in the establishment of normal sperm morphology during spermatogenesis and is required for acrosome attachment to the nuclear envelope. The sequence is that of Cylicin-1 from Mus musculus (Mouse).